The chain runs to 520 residues: Endosomal/lysosomal proton channel TMEM175 (520 aa).

The tract at residues M1–H27 is disordered. The Cytoplasmic portion of the chain corresponds to M1 to S49. Residues I9–R21 show a composition bias toward basic and acidic residues. Residues H50–A72 traverse the membrane as a helical segment. The short motif at R51–D57 is the RxxxFSD motif 1 element. The Lumenal portion of the chain corresponds to H73–K93. Residues T74 to D79 form a short helix H1-1 region. The short helix H2-1 stretch occupies residues E81–Q87. Residues I94 to Q116 traverse the membrane as a helical segment. The Cytoplasmic portion of the chain corresponds to V117–D122. The chain crosses the membrane as a helical span at residues D123–S144. At L145–L154 the chain is on the lumenal side. The chain crosses the membrane as a helical span at residues G155 to Y176. The Cytoplasmic segment spans residues G177 to H200. The next 2 membrane-spanning stretches (helical) occupy residues I201–I221 and F222–C242. Residues L243–S274 are Cytoplasmic-facing. The helical transmembrane segment at K275–E299 threads the bilayer. Residues R277–D283 carry the RxxxFSD motif 2 motif. Topologically, residues G300–E326 are lumenal. Positions P305–D313 are short helix H1-2. A short helix H2-2 region spans residues S315–Q321. The helical transmembrane segment at Y327–L349 threads the bilayer. Residues H350–T355 are Cytoplasmic-facing. A helical transmembrane segment spans residues R356–Q377. Residues L378 to A392 are Lumenal-facing. The helical transmembrane segment at V393 to T413 threads the bilayer. Over A414 to H433 the chain is Cytoplasmic. The chain crosses the membrane as a helical span at residues T434–L457. The Lumenal portion of the chain corresponds to S458 to R459. The chain crosses the membrane as a helical span at residues F460–A486. Residues L487–T520 lie on the Cytoplasmic side of the membrane.

This sequence belongs to the TMEM175 family. Homodimer.

It localises to the endosome membrane. Its subcellular location is the lysosome membrane. It catalyses the reaction H(+)(in) = H(+)(out). It carries out the reaction K(+)(in) = K(+)(out). With respect to regulation, active at low pH (under pH 4.6): proton channel activity is activated by luminal side protons. Polyunsaturated fatty acids, such as arachidonic acid, also activate the channel activity. Functionally, proton-activated proton channel that catalyzes proton efflux from endosomes and lysosomes to maintain a steady-state pH. Activated at low pH (under pH 4.6) by luminal side protons: selectively mediates lysosomal proton release from lysosomes, eliciting a proton leak that balances V-ATPase activity to maintain pH homeostasis. Regulation of lumenal pH stability is required for autophagosome-lysosome fusion. Also acts as a potassium channel at higher pH, regulating potassium conductance in endosomes and lysosomes. This chain is Endosomal/lysosomal proton channel TMEM175, found in Danio rerio (Zebrafish).